The sequence spans 306 residues: Nucleotide-binding protein amb4396 (306 aa).

The span at 1-14 (MSDLHSSPTDQTSA) shows a compositional bias: polar residues. The interval 1-20 (MSDLHSSPTDQTSAPAHAGG) is disordered. 29–36 (GMSGAGKT) contacts ATP. 77–80 (DIRT) contributes to the GTP binding site.

This sequence belongs to the RapZ-like family.

Functionally, displays ATPase and GTPase activities. This Paramagnetospirillum magneticum (strain ATCC 700264 / AMB-1) (Magnetospirillum magneticum) protein is Nucleotide-binding protein amb4396.